The sequence spans 326 residues: Probable pectate lyase B (326 aa).

A signal peptide spans 1–15; sequence MRVTAILTLATIAIA. Residues aspartate 133, aspartate 162, and aspartate 166 each coordinate Ca(2+). Arginine 219 is a catalytic residue.

This sequence belongs to the polysaccharide lyase 1 family. Ca(2+) is required as a cofactor.

The protein localises to the secreted. The catalysed reaction is Eliminative cleavage of (1-&gt;4)-alpha-D-galacturonan to give oligosaccharides with 4-deoxy-alpha-D-galact-4-enuronosyl groups at their non-reducing ends.. In terms of biological role, pectinolytic enzyme consist of four classes of enzymes: pectin lyase, polygalacturonase, pectin methylesterase and rhamnogalacturonase. Among pectinolytic enzymes, pectin lyase is the most important in depolymerization of pectin, since it cleaves internal glycosidic bonds of highly methylated pectins. Favors pectate, the anion, over pectin, the methyl ester. The protein is Probable pectate lyase B (plyB) of Aspergillus flavus (strain ATCC 200026 / FGSC A1120 / IAM 13836 / NRRL 3357 / JCM 12722 / SRRC 167).